The chain runs to 1407 residues: DNA-directed RNA polymerase subunit beta' (1407 aa).

The Zn(2+) site is built by C70, C72, C85, and C88. 3 residues coordinate Mg(2+): D460, D462, and D464. C814, C888, C895, and C898 together coordinate Zn(2+). The residue at position 972 (K972) is an N6-acetyllysine.

Belongs to the RNA polymerase beta' chain family. The RNAP catalytic core consists of 2 alpha, 1 beta, 1 beta' and 1 omega subunit. When a sigma factor is associated with the core the holoenzyme is formed, which can initiate transcription. Mg(2+) serves as cofactor. The cofactor is Zn(2+).

The enzyme catalyses RNA(n) + a ribonucleoside 5'-triphosphate = RNA(n+1) + diphosphate. Its function is as follows. DNA-dependent RNA polymerase catalyzes the transcription of DNA into RNA using the four ribonucleoside triphosphates as substrates. In Escherichia coli O6:H1 (strain CFT073 / ATCC 700928 / UPEC), this protein is DNA-directed RNA polymerase subunit beta'.